Consider the following 429-residue polypeptide: Adenylosuccinate synthetase (429 aa).

GTP is bound by residues 12–18 (GDEGKGK) and 40–42 (GHT). The active-site Proton acceptor is the Asp-13. 2 residues coordinate Mg(2+): Asp-13 and Gly-40. IMP-binding positions include 13–16 (DEGK), 38–41 (NAGH), Thr-129, Arg-143, Gln-223, Thr-238, and Arg-302. Residue His-41 is the Proton donor of the active site. 298–304 (VVTGRKR) is a binding site for substrate. Residues Arg-304, 330–332 (KLD), and 412–414 (STS) contribute to the GTP site.

It belongs to the adenylosuccinate synthetase family. As to quaternary structure, homodimer. It depends on Mg(2+) as a cofactor.

It is found in the cytoplasm. It carries out the reaction IMP + L-aspartate + GTP = N(6)-(1,2-dicarboxyethyl)-AMP + GDP + phosphate + 2 H(+). Its pathway is purine metabolism; AMP biosynthesis via de novo pathway; AMP from IMP: step 1/2. Its function is as follows. Plays an important role in the de novo pathway of purine nucleotide biosynthesis. Catalyzes the first committed step in the biosynthesis of AMP from IMP. The polypeptide is Adenylosuccinate synthetase (Bartonella henselae (strain ATCC 49882 / DSM 28221 / CCUG 30454 / Houston 1) (Rochalimaea henselae)).